A 72-amino-acid chain; its full sequence is Translation initiation factor IF-1 2 (72 aa).

An S1-like domain is found at M1–K72.

It belongs to the IF-1 family. As to quaternary structure, component of the 30S ribosomal translation pre-initiation complex which assembles on the 30S ribosome in the order IF-2 and IF-3, IF-1 and N-formylmethionyl-tRNA(fMet); mRNA recruitment can occur at any time during PIC assembly.

The protein resides in the cytoplasm. In terms of biological role, one of the essential components for the initiation of protein synthesis. Stabilizes the binding of IF-2 and IF-3 on the 30S subunit to which N-formylmethionyl-tRNA(fMet) subsequently binds. Helps modulate mRNA selection, yielding the 30S pre-initiation complex (PIC). Upon addition of the 50S ribosomal subunit IF-1, IF-2 and IF-3 are released leaving the mature 70S translation initiation complex. In Cupriavidus necator (strain ATCC 17699 / DSM 428 / KCTC 22496 / NCIMB 10442 / H16 / Stanier 337) (Ralstonia eutropha), this protein is Translation initiation factor IF-1 2.